Consider the following 150-residue polypeptide: Large ribosomal subunit protein bL9 (150 aa).

Belongs to the bacterial ribosomal protein bL9 family.

In terms of biological role, binds to the 23S rRNA. This chain is Large ribosomal subunit protein bL9, found in Lactiplantibacillus plantarum (strain ATCC BAA-793 / NCIMB 8826 / WCFS1) (Lactobacillus plantarum).